The following is a 166-amino-acid chain: Endoribonuclease YbeY (166 aa).

Zn(2+) contacts are provided by H130, H134, and H140.

It belongs to the endoribonuclease YbeY family. The cofactor is Zn(2+).

It is found in the cytoplasm. In terms of biological role, single strand-specific metallo-endoribonuclease involved in late-stage 70S ribosome quality control and in maturation of the 3' terminus of the 16S rRNA. This chain is Endoribonuclease YbeY, found in Streptococcus uberis (strain ATCC BAA-854 / 0140J).